The following is a 64-amino-acid chain: Arasin 1 (64 aa).

A signal peptide spans 1–25; the sequence is MERRTLLVVLLVCSCVVAAAAEASP. The tract at residues 22-43 is disordered; that stretch reads EASPSRWPSPGRPRPFPGRPKP. Residues 26–48 are pro/Arg-rich region responsible for antibacterial and antifungal activity; sequence SRWPSPGRPRPFPGRPKPIFRPR. A compositionally biased stretch (pro residues) spans 31–43; sequence PGRPRPFPGRPKP. Residues 49–62 are cystein-containing C-terminal region important for stability but not essential for antimicrobial activity; that stretch reads PCNCYAPPCPCDRW. Intrachain disulfides connect C50-C59 and C52-C57. Positions 63–64 are excised as a propeptide; the sequence is RH.

Interacts with chitin through the N-terminal region (26-48). This interaction may be important, since chitin is a component of the fungal cell wall, as well as of the crab exoskeleton (permitting a possible action of arasin in wound healing in case of lesions). Post-translationally, disulfide bonds are important for activity especially against Gram-negative bacteria, since the linearization of the peptide causes a strong decrease of activity on these bacteria. As to expression, mainly expressed in hemocytes. No or very low expression in heart, gills, inestines, and epidermis.

Its function is as follows. Antimicrobial peptide that has a large activity spectrum with activity against Gram-positive, Gram-negative bacteria, as well as against fungi. Shows activity at micromolar concentrations. Displays minimal inhibitory concentration (MIC) values lower than minimal bactericidal concentrations (MBC). Synthetic peptides with similar activities than the full length peptide (composed of the first 23 or 25 amino acids (Arasin 1(26-48) or Arasin 1(26-50))) may have a dual mode of action depending on the peptide concentrations. At MIC concentrations, the peptide penetrates into the cytoplasm of target cells (tested on the Gram-negative E.coli). The two inner membrane proteins YgdD and SbmA may be required for this uptake. At concentrations higher than MIC, arasin may act by disrupting membranes. Full-length and N-terminal peptides do not show hemolytic activity. The chain is Arasin 1 from Hyas araneus (Atlantic lyre crab).